Reading from the N-terminus, the 686-residue chain is ATP-dependent DNA helicase RecG (686 aa).

A wedge domain region spans residues 50 to 149 (TVIDLNQAED…GTQTQENADV (100 aa)). Residues 279–439 (DLKAPIRMHR…VFGEMDVSSI (161 aa)) form the Helicase ATP-binding domain. 292–299 (GDVGSGKT) contacts ATP. Residues 392–395 (DEQH) carry the DEAH box motif. The Helicase C-terminal domain maps to 462-618 (VLMQMTSELK…GFELSERDLE (157 aa)).

This sequence belongs to the helicase family. RecG subfamily. As to quaternary structure, monomer.

It carries out the reaction Couples ATP hydrolysis with the unwinding of duplex DNA by translocating in the 3'-5' direction.. The enzyme catalyses ATP + H2O = ADP + phosphate + H(+). In terms of biological role, plays a critical role in recombination and DNA repair. Helps process Holliday junction intermediates to mature products by catalyzing branch migration. Has replication fork regression activity, unwinds stalled or blocked replication forks to make a HJ that can be resolved. Has a DNA unwinding activity characteristic of a DNA helicase with 3'-5' polarity. This chain is ATP-dependent DNA helicase RecG, found in Staphylococcus aureus (strain NCTC 8325 / PS 47).